The following is a 219-amino-acid chain: Glucagon-2 (219 aa).

Positions Met1–Gln20 are cleaved as a signal peptide. Propeptides lie at residues Ser21–Val50, Ser84–Glu95, Asn136–Glu140, Ile175–Ser178, and Lys213–His219. Residues Val23–Asp43 form a disordered region.

The protein belongs to the glucagon family.

Its subcellular location is the secreted. Functionally, promotes hydrolysis of glycogen and lipids, and raises the blood sugar level. This Xenopus laevis (African clawed frog) protein is Glucagon-2 (gcg2).